The chain runs to 332 residues: Transcription initiation factor IIB 2 (332 aa).

Residues 1-10 (MSDTITTRTY) are compositionally biased toward polar residues. The segment at 1 to 36 (MSDTITTRTYSADAKSRDVRPRESERDETQQDETQV) is disordered. A compositionally biased stretch (basic and acidic residues) spans 14 to 29 (AKSRDVRPRESERDET). The TFIIB-type zinc-finger motif lies at 33 to 63 (ETQVCPECSGHLVTDEEHGETICEDCGLVVE). 4 residues coordinate Zn(2+): Cys-37, Cys-40, Cys-55, and Cys-58. Residues 77–106 (DSAERDSKSRVGAPTTKMMHDKGLSTNIGW) form a disordered region. 2 tandem repeats follow at residues 149 to 232 (GEID…VREL) and 243 to 324 (QYVP…ELLE).

The protein belongs to the TFIIB family.

Functionally, stabilizes TBP binding to an archaeal box-A promoter. Also responsible for recruiting RNA polymerase II to the pre-initiation complex (DNA-TBP-TFIIB). The polypeptide is Transcription initiation factor IIB 2 (Haloferax volcanii (strain ATCC 29605 / DSM 3757 / JCM 8879 / NBRC 14742 / NCIMB 2012 / VKM B-1768 / DS2) (Halobacterium volcanii)).